Here is a 248-residue protein sequence, read N- to C-terminus: Ribonuclease PH (248 aa).

Phosphate is bound by residues arginine 93 and 131 to 133 (GTR).

This sequence belongs to the RNase PH family. In terms of assembly, homohexameric ring arranged as a trimer of dimers.

The enzyme catalyses tRNA(n+1) + phosphate = tRNA(n) + a ribonucleoside 5'-diphosphate. Its function is as follows. Phosphorolytic 3'-5' exoribonuclease that plays an important role in tRNA 3'-end maturation. Removes nucleotide residues following the 3'-CCA terminus of tRNAs; can also add nucleotides to the ends of RNA molecules by using nucleoside diphosphates as substrates, but this may not be physiologically important. Probably plays a role in initiation of 16S rRNA degradation (leading to ribosome degradation) during starvation. The protein is Ribonuclease PH of Bifidobacterium longum (strain NCC 2705).